A 237-amino-acid chain; its full sequence is Glutathione S-transferase psoE (237 aa).

The 78-residue stretch at 2-79 (VFGTLYTFPG…YITSQNEQTT (78 aa)) folds into the GST N-terminal domain. Arg37, Lys49, Val50, Glu63, Cys64, and Asn99 together coordinate glutathione. Lys49 provides a ligand contact to substrate. One can recognise a GST C-terminal domain in the interval 84–222 (DKKEYAEIIK…NNPPEKKPET (139 aa)). Residue Gln108 participates in substrate binding. Positions 208–222 (EPKLTNNPPEKKPET) are enriched in basic and acidic residues. A disordered region spans residues 208–237 (EPKLTNNPPEKKPETVPKNGAAVAIEATQA).

The protein belongs to the GST superfamily. Glutathione is required as a cofactor.

Its pathway is secondary metabolite biosynthesis. Glutathione S-transferase; part of the gene cluster that mediates the biosynthesis of pseurotin A, a competitive inhibitor of chitin synthase and an inducer of nerve-cell proliferation. The PKS-NRPS hybrid synthetase psoA is responsible for the biosynthesis of azaspirene, one of the first intermediates having the 1-oxa-7-azaspiro[4,4]-non-2-ene-4,6-dione core of pseurotin, via condensation of one acetyl-CoA, 4 malonyl-CoA, and a L-phenylalanine molecule. The dual-functional monooxygenase/methyltransferase psoF seems to be involved in the addition of the C3 methyl group onto the pseurotin scaffold. Azaspirene is then converted to synerazol through 4 steps including oxidation of C17 by the cytochrome P450 monooxygenase psoD, O-methylation of the hydroxy group of C8 by the methyltransferase psoC, and the trans-to-cis isomerization of the C13 olefin by the glutathione S-transferase psoE. The fourth step of synerazol production is performed by the dual-functional monooxygenase/methyltransferase psoF which seems to catalyze the epoxidation of the intermediate deepoxy-synerazol. Synerazol can be attacked by a water molecule nonenzymatically at two different positions to yield two diol products, pseurotin A and pseurotin D. This Aspergillus fumigatus (strain ATCC MYA-4609 / CBS 101355 / FGSC A1100 / Af293) (Neosartorya fumigata) protein is Glutathione S-transferase psoE.